The sequence spans 202 residues: Small ribosomal subunit protein uS4c (202 aa).

In terms of domain architecture, S4 RNA-binding spans M90 to N154.

The protein belongs to the universal ribosomal protein uS4 family. Part of the 30S ribosomal subunit. Contacts protein S5. The interaction surface between S4 and S5 is involved in control of translational fidelity.

The protein resides in the plastid. It localises to the chloroplast. One of the primary rRNA binding proteins, it binds directly to 16S rRNA where it nucleates assembly of the body of the 30S subunit. In terms of biological role, with S5 and S12 plays an important role in translational accuracy. The chain is Small ribosomal subunit protein uS4c (rps4) from Monoclea forsteri (Liverwort).